A 229-amino-acid chain; its full sequence is Ribonuclease HII (229 aa).

The 190-residue stretch at 34-223 (WPVAGADEAG…LRKTENGPET (190 aa)) folds into the RNase H type-2 domain. A divalent metal cation contacts are provided by Asp-40, Glu-41, and Asp-131. Residues 209–229 (MSFRPLRKTENGPETDELLSE) are disordered.

The protein belongs to the RNase HII family. Mn(2+) is required as a cofactor. It depends on Mg(2+) as a cofactor.

Its subcellular location is the cytoplasm. The catalysed reaction is Endonucleolytic cleavage to 5'-phosphomonoester.. Its function is as follows. Endonuclease that specifically degrades the RNA of RNA-DNA hybrids. The sequence is that of Ribonuclease HII from Rhizobium johnstonii (strain DSM 114642 / LMG 32736 / 3841) (Rhizobium leguminosarum bv. viciae).